Reading from the N-terminus, the 354-residue chain is Peptide chain release factor 1 (354 aa).

Q230 carries the N5-methylglutamine modification.

This sequence belongs to the prokaryotic/mitochondrial release factor family. In terms of processing, methylated by PrmC. Methylation increases the termination efficiency of RF1.

Its subcellular location is the cytoplasm. Functionally, peptide chain release factor 1 directs the termination of translation in response to the peptide chain termination codons UAG and UAA. This chain is Peptide chain release factor 1, found in Novosphingobium aromaticivorans (strain ATCC 700278 / DSM 12444 / CCUG 56034 / CIP 105152 / NBRC 16084 / F199).